A 417-amino-acid polypeptide reads, in one-letter code: Phosphoglycerate kinase 1 (417 aa).

An N-acetylserine modification is found at Ser-2. 2 positions are modified to phosphoserine: Ser-2 and Ser-4. The interval 2–186 is globular domain-1; it reads SLSNKLTLDK…VGVNLPQKAG (185 aa). At Lys-6 the chain carries N6-succinyllysine. Lys-11 bears the N6-acetyllysine mark. Residues Val-23, Asp-24, Phe-25, Asn-26, Gln-38, and Arg-39 each contribute to the (2R)-3-phosphoglycerate site. The segment at 38–43 is mitochondrial targeting region exposed following cis-trans isomerization by PIN1 and recognized by the TOM complex for mitochondrial translocation of the protein; that stretch reads QRIKAA. Lys-48 bears the N6-acetyllysine; alternate mark. At Lys-48 the chain carries N6-succinyllysine; alternate. (2R)-3-phosphoglycerate is bound by residues Ser-62, His-63, Gly-65, and Arg-66. The residue at position 75 (Lys-75) is an N6-acetyllysine. The residue at position 76 (Tyr-76) is a Phosphotyrosine. An N6-acetyllysine mark is found at Lys-86 and Lys-91. Lys-97 carries the post-translational modification N6-acetyllysine; alternate. Lys-97 is modified (N6-(2-hydroxyisobutyryl)lysine; alternate). Residues Leu-122 and Arg-123 each coordinate (2R)-3-phosphoglycerate. At Lys-131 the chain carries N6-acetyllysine; alternate. N6-malonyllysine; alternate is present on Lys-131. Residue Lys-146 is modified to N6-acetyllysine. (2R)-3-phosphoglycerate contacts are provided by His-170 and Arg-171. The segment at 187–190 is linker; sequence GFLM. Residue Lys-191 is modified to N6-succinyllysine. The tract at residues 191–417 is globular domain-2; the sequence is KKELNYFAKA…LPGVDALSNV (227 aa). The residue at position 196 (Tyr-196) is a Phosphotyrosine. Lys-199 is subject to N6-acetyllysine. At Ser-203 the chain carries Phosphoserine. Gly-214 lines the ADP pocket. Position 214 (Gly-214) interacts with CDP. AMP-binding residues include Ala-215 and Lys-216. ATP is bound at residue Ala-215. Ala-215 serves as a coordination point for Mg(2+). Lys-216 carries the post-translational modification N6-(2-hydroxyisobutyryl)lysine. Positions 218 and 219 each coordinate Mg(2+). Asp-219 is a binding site for CDP. Lys-220 lines the AMP pocket. Lys-220 contributes to the ATP binding site. Lys-220 carries the N6-(2-hydroxyisobutyryl)lysine modification. Residue Gly-238 coordinates ADP. Gly-238 lines the CDP pocket. Position 239 (Gly-239) interacts with AMP. Gly-239 is an ATP binding site. An N6-acetyllysine mark is found at Lys-267 and Lys-291. Gly-313 contacts AMP. Gly-313 contacts ATP. At Lys-323 the chain carries N6-(2-hydroxyisobutyryl)lysine. 3 residues coordinate CDP: Gly-338, Val-340, and Phe-343. Phe-343 serves as a coordination point for ADP. Glu-344 provides a ligand contact to AMP. Glu-344 lines the ATP pocket. Lys-361 is subject to N6-acetyllysine. Residues Asp-375 and Thr-376 each contribute to the ATP site. Asp-375 lines the Mg(2+) pocket. The tract at residues 406 to 417 is associated with globular domain 1; the sequence is KVLPGVDALSNV.

The protein belongs to the phosphoglycerate kinase family. As to quaternary structure, monomer. Interacts with kinase MAPK1/ERK2; the interaction is direct, occurs under hypoxic conditions, and promotes its interaction with PIN1. Interacts with peptidyl-prolyl cis-trans isomerase PIN1; the interaction is direct, occurs under hypoxic conditions, and targets the protein to the mitochondrion by promoting interactions with the TOM complex. Interacts with mitochondrial circRNA mcPGK1 (via its 2nd stem-loop); the interaction is direct and targets the protein to the mitochondrion by promoting interactions with the TOM complex. Interacts with pyruvate dehydrogenase kinase PDK1; the interaction is direct, occurs under hypoxic conditions and leads to PDK1-mediated inhibition of pyruvate dehydrogenase complex activity. Mg(2+) serves as cofactor. Phosphorylated at Ser-203 by MAPK1/ERK2 under hypoxic conditions, which promotes its mitochondrial targeting.

Its subcellular location is the cytoplasm. The protein localises to the cytosol. It localises to the mitochondrion matrix. It catalyses the reaction (2R)-3-phosphoglycerate + ATP = (2R)-3-phospho-glyceroyl phosphate + ADP. The catalysed reaction is L-seryl-[protein] + ATP = O-phospho-L-seryl-[protein] + ADP + H(+). It participates in carbohydrate degradation; glycolysis; pyruvate from D-glyceraldehyde 3-phosphate: step 2/5. Catalyzes one of the two ATP producing reactions in the glycolytic pathway via the reversible conversion of 1,3-diphosphoglycerate to 3-phosphoglycerate. Both L- and D- forms of purine and pyrimidine nucleotides can be used as substrates, but the activity is much lower on pyrimidines. In addition to its role as a glycolytic enzyme, it seems that PGK-1 acts as a polymerase alpha cofactor protein (primer recognition protein). Acts as a protein kinase when localized to the mitochondrion where it phosphorylates pyruvate dehydrogenase kinase PDK1 to inhibit pyruvate dehydrogenase complex activity and suppress the formation of acetyl-coenzyme A from pyruvate, and consequently inhibit oxidative phosphorylation and promote glycolysis. May play a role in sperm motility. This is Phosphoglycerate kinase 1 (PGK1) from Equus caballus (Horse).